Here is a 482-residue protein sequence, read N- to C-terminus: 2-succinylbenzoate--CoA ligase (482 aa).

Belongs to the ATP-dependent AMP-binding enzyme family. MenE subfamily.

It carries out the reaction 2-succinylbenzoate + ATP + CoA = 2-succinylbenzoyl-CoA + AMP + diphosphate. It participates in quinol/quinone metabolism; 1,4-dihydroxy-2-naphthoate biosynthesis; 1,4-dihydroxy-2-naphthoate from chorismate: step 5/7. Its pathway is quinol/quinone metabolism; menaquinone biosynthesis. In terms of biological role, converts 2-succinylbenzoate (OSB) to 2-succinylbenzoyl-CoA (OSB-CoA). The chain is 2-succinylbenzoate--CoA ligase from Bacillus anthracis (strain A0248).